Consider the following 257-residue polypeptide: Triosephosphate isomerase (257 aa).

Substrate contacts are provided by N12 and K14. The active-site Electrophile is the H98. The active-site Proton acceptor is E169.

The protein belongs to the triosephosphate isomerase family. As to quaternary structure, homodimer.

The enzyme catalyses D-glyceraldehyde 3-phosphate = dihydroxyacetone phosphate. Its pathway is carbohydrate biosynthesis; gluconeogenesis. It participates in carbohydrate degradation; glycolysis; D-glyceraldehyde 3-phosphate from glycerone phosphate: step 1/1. In Dictyostelium discoideum (Social amoeba), this protein is Triosephosphate isomerase (tpiA).